We begin with the raw amino-acid sequence, 236 residues long: CD81 antigen (236 aa).

The Cytoplasmic segment spans residues 1-12 (MGVEGCTKCIKY). The helical transmembrane segment at 13–33 (LLFVFNFVFWLAGGVILGVAL) threads the bilayer. Residues 34–63 (WLRHDPQTTTLLYLELGDKPAPSTFYVGIY) lie on the Extracellular side of the membrane. The chain crosses the membrane as a helical span at residues 64–84 (ILIAVGAVMMFVGFLGCYGAI). Residues 85–89 (QESQC) lie on the Cytoplasmic side of the membrane. A helical membrane pass occupies residues 90–112 (LLGTFFTCLVILFACEVAAGIWG). At 113–201 (FVNKDQIAKD…QKIDELFSGK (89 aa)) the chain is on the extracellular side. 2 disulfides stabilise this stretch: C156–C190 and C157–C175. The helical transmembrane segment at 202-224 (LYLIGIAAIVVAVIMIFEMILSM) threads the bilayer. E219 provides a ligand contact to cholesterol. Over 225–236 (VLCCGIRNSSVY) the chain is Cytoplasmic.

It belongs to the tetraspanin (TM4SF) family. In terms of assembly, homodimer. Part of a complex composed of CD19, CR2/CD21, CD81 and IFITM1/CD225 in the membrane of mature B cells. Interacts (via the second extracellular domain) with CD19; this interaction is initiated early during biosynthesis in the ER and enables trafficking of only properly folded CD19. Part of a complex that includes MHC class II/HLA-DR molecules and IFITM1. Interacts with IFITM1. Interacts with IFITM2 and IFITM3. Part of integrin-tetraspanin complex composed of CD9, CD81, beta-1 and beta-2 integrins in the membrane of monocyte/macrophages. Interacts (via the second extracellular domain) with integrin ITGAV:ITGB3. Interacts with CD247/CD3 zeta, ICAM1 and CD9 at the immune synapse on T cell membrane. Part of a GPCR-tetraspanin complex consisting at least of ADGRG1, CD81, possibly CD9, and GNA11 in which CD81 enhances the association of ADGRG1 with GNA11. Part of a complex composed of CD9, CD81, PTGFRN and IGSF8. Interacts directly with IGSF8. Interacts with CD53 and SCIMP. Interacts with SAMHD1 (via its C-terminus). Interacts with glypican GPC3 and with the transcriptional repressor HHEX; binding to GPC3 decreases the availability of free CD81 for binding to HHEX, resulting in nuclear translocation of HHEX and transcriptional repression. Interacts with CLDN1. Interacts with CLDN6 and CLDN9. Post-translationally, not glycosylated. In terms of processing, likely constitutively palmitoylated at low levels. Protein palmitoylation is up-regulated upon coligation of BCR and CD9-C2R-CD81 complexes in lipid rafts.

The protein resides in the cell membrane. Its subcellular location is the basolateral cell membrane. Structural component of specialized membrane microdomains known as tetraspanin-enriched microdomains (TERMs), which act as platforms for receptor clustering and signaling. Essential for trafficking and compartmentalization of CD19 receptor on the surface of activated B cells. Upon initial encounter with microbial pathogens, enables the assembly of CD19-CR2/CD21 and B cell receptor (BCR) complexes at signaling TERMs, lowering the threshold dose of antigen required to trigger B cell clonal expansion and antibody production. In T cells, facilitates the localization of CD247/CD3 zeta at antigen-induced synapses with B cells, providing for costimulation and polarization toward T helper type 2 phenotype. Present in MHC class II compartments, may also play a role in antigen presentation. Can act both as positive and negative regulator of homotypic or heterotypic cell-cell fusion processes. Positively regulates sperm-egg fusion and may be involved in acrosome reaction. In myoblasts, associates with CD9 and PTGFRN and inhibits myotube fusion during muscle regeneration. In macrophages, associates with CD9 and beta-1 and beta-2 integrins, and prevents macrophage fusion into multinucleated giant cells specialized in ingesting complement-opsonized large particles. Also prevents the fusion of mononuclear cell progenitors into osteoclasts in charge of bone resorption. May regulate the compartmentalization of enzymatic activities. In T cells, defines the subcellular localization of dNTPase SAMHD1 and permits its degradation by the proteasome, thereby controlling intracellular dNTP levels. Also involved in cell adhesion and motility. Positively regulates integrin-mediated adhesion of macrophages, particularly relevant for the inflammatory response in the lung. The polypeptide is CD81 antigen (Cd81) (Rattus norvegicus (Rat)).